Consider the following 316-residue polypeptide: MSASHPGILHEYTERLVAFELVGKSNVTLTSNVTRSLLLFVGGLGDGLLTVPYVQELVNPLDEIGWSIVQVQTQSSYIGWGTGSLKRDDEDLHKAVDYFLHIGGADFSTRKIVLMGHSTGSQNVLYYLTQSILPNYLIAGIAQAPVSDREAAYQFNGKEKTKELVDWVKAEYLDKGLGNDVLPRSKVENFFGEVPTSANRCIDLTDVRGNDDFFSSDLSADDFAKTFGNLKEISGSTAHSQLILLMSERDEFVSPSTDKAQLLNRFRESIRPTTSNSSLSGIIPGATHNVGPKSSPEALKWLINQLITALRSFIDQ.

The protein belongs to the UPF0613 family.

Its subcellular location is the cytoplasm. The protein resides in the nucleus. The protein is UPF0613 protein PB24D3.06c of Schizosaccharomyces pombe (strain 972 / ATCC 24843) (Fission yeast).